Reading from the N-terminus, the 144-residue chain is Small ribosomal subunit protein bS6 (144 aa).

Residues 97–144 (EEGPSAMMRKADRDRERDERGGPREGGFRSERGPRRPREEETTASVEE) are disordered. Over residues 105–137 (RKADRDRERDERGGPREGGFRSERGPRRPREEE) the composition is skewed to basic and acidic residues.

It belongs to the bacterial ribosomal protein bS6 family.

Its function is as follows. Binds together with bS18 to 16S ribosomal RNA. The sequence is that of Small ribosomal subunit protein bS6 from Afipia carboxidovorans (strain ATCC 49405 / DSM 1227 / KCTC 32145 / OM5) (Oligotropha carboxidovorans).